The following is a 66-amino-acid chain: Large ribosomal subunit protein bL35 (66 aa).

Belongs to the bacterial ribosomal protein bL35 family.

The chain is Large ribosomal subunit protein bL35 from Borreliella burgdorferi (strain ATCC 35210 / DSM 4680 / CIP 102532 / B31) (Borrelia burgdorferi).